The following is a 155-amino-acid chain: uncharacterized protein (155 aa).

The N-terminal stretch at 1–24 is a signal peptide; that stretch reads MQQLSKRRLSALFVTAFLPVTAFA.

This is an uncharacterized protein from Chromohalobacter salexigens (strain ATCC BAA-138 / DSM 3043 / CIP 106854 / NCIMB 13768 / 1H11).